We begin with the raw amino-acid sequence, 277 residues long: Phosphatidylglycerol--prolipoprotein diacylglyceryl transferase (277 aa).

4 helical membrane-spanning segments follow: residues 22–42 (ISIR…YIVV), 59–79 (LFFY…CLFY), 107–127 (GYEG…LWLY), and 133–153 (MNYM…ACFI). Arg-154 is an a 1,2-diacyl-sn-glycero-3-phospho-(1'-sn-glycerol) binding site. 3 helical membrane passes run 186–206 (PAQL…MFLY), 216–236 (GFFF…VEFL), and 251–271 (MGQW…FFYG).

Belongs to the Lgt family.

The protein resides in the cell inner membrane. The enzyme catalyses L-cysteinyl-[prolipoprotein] + a 1,2-diacyl-sn-glycero-3-phospho-(1'-sn-glycerol) = an S-1,2-diacyl-sn-glyceryl-L-cysteinyl-[prolipoprotein] + sn-glycerol 1-phosphate + H(+). It functions in the pathway protein modification; lipoprotein biosynthesis (diacylglyceryl transfer). Functionally, catalyzes the transfer of the diacylglyceryl group from phosphatidylglycerol to the sulfhydryl group of the N-terminal cysteine of a prolipoprotein, the first step in the formation of mature lipoproteins. This chain is Phosphatidylglycerol--prolipoprotein diacylglyceryl transferase, found in Bacteroides fragilis (strain ATCC 25285 / DSM 2151 / CCUG 4856 / JCM 11019 / LMG 10263 / NCTC 9343 / Onslow / VPI 2553 / EN-2).